We begin with the raw amino-acid sequence, 461 residues long: MRADWVAKRQGQSNVSQMHYARQGVITEEMDYVAKRENLPVDLIRDEVARGRMIIPANINHTNLEPMCIGIASKCKVNANIGASPNSSEINEELAKLQQAVKYGADTVMDLSTGGGNLDEIRTAIIKASPVPIGTVPIYQALESVHGNMENLTANDFLHIIEKHAQQGVDYMTIHAGILIEHLPLVKNRITGIVSRGGGILARWMLHHHKQNPLYTHFDDIIEIFKRYDVSFSLGDSLRPGCTHDASDEAQLAELKTLGQLTRRAWEHDVQVMVEGPGHVPMDQIEFNVKKQMEECSEAPFYVLGPLVTDIAPGYDHITSAIGAAMAGWYGTAMLCYVTPKEHLGLPDAEDVRNGLIAYKIAAHAADIARHRPGARDRDDELSHARYNFDWEKQFELSLDPERAREYHDETLPADIYKTAEFCSMCGPKFCPMQTKVDADALTELEKYLASTAAKEELAKA.

Substrate is bound by residues Asn80, Met109, Tyr139, His175, 195–197 (SRG), 236–239 (DSLR), and Glu275. His279 contacts Zn(2+). Tyr302 lines the substrate pocket. His343 contributes to the Zn(2+) binding site. [4Fe-4S] cluster-binding residues include Cys423, Cys426, and Cys431.

It belongs to the ThiC family. Requires [4Fe-4S] cluster as cofactor.

The catalysed reaction is 5-amino-1-(5-phospho-beta-D-ribosyl)imidazole + S-adenosyl-L-methionine = 4-amino-2-methyl-5-(phosphooxymethyl)pyrimidine + CO + 5'-deoxyadenosine + formate + L-methionine + 3 H(+). The protein operates within cofactor biosynthesis; thiamine diphosphate biosynthesis. Functionally, catalyzes the synthesis of the hydroxymethylpyrimidine phosphate (HMP-P) moiety of thiamine from aminoimidazole ribotide (AIR) in a radical S-adenosyl-L-methionine (SAM)-dependent reaction. The sequence is that of Phosphomethylpyrimidine synthase from Picosynechococcus sp. (strain ATCC 27264 / PCC 7002 / PR-6) (Agmenellum quadruplicatum).